The sequence spans 428 residues: Tyrosine--tRNA ligase (428 aa).

Tyr34 is an L-tyrosine binding site. The short motif at 39–48 is the 'HIGH' region element; it reads PTADSLHIGH. The L-tyrosine site is built by Tyr171 and Gln175. Residues 236–240 carry the 'KMSKS' region motif; it reads KFGKT. Lys239 contacts ATP. Positions 358 to 424 constitute an S4 RNA-binding domain; that stretch reads VGLIDLLVDA…GKKKYFLIQV (67 aa).

The protein belongs to the class-I aminoacyl-tRNA synthetase family. TyrS type 1 subfamily. In terms of assembly, homodimer.

It localises to the cytoplasm. It catalyses the reaction tRNA(Tyr) + L-tyrosine + ATP = L-tyrosyl-tRNA(Tyr) + AMP + diphosphate + H(+). In terms of biological role, catalyzes the attachment of tyrosine to tRNA(Tyr) in a two-step reaction: tyrosine is first activated by ATP to form Tyr-AMP and then transferred to the acceptor end of tRNA(Tyr). The protein is Tyrosine--tRNA ligase of Oceanobacillus iheyensis (strain DSM 14371 / CIP 107618 / JCM 11309 / KCTC 3954 / HTE831).